The sequence spans 234 residues: MNILKILILLELIYTCVSGLSFTVTSKIYMDVKHQKKPLGRIVFGLFGKRAPKTVTNFRHICLRGINGTTYVGSEFHRVISRFLIQGGDIVNNDGTGSTSIYGDFFQDEALDVEHLRPGYLGMANRGPDTNGCQFYVTTVAAQWLNGKHTVFGKVIEGMDTVYAIEDVKTDTDDHPIDPVIIVNCGEMPTEPYEFYPDDFSILGWIKAAGLPFCSSFIVLMIFHYFFRQLNMYC.

An N-terminal signal peptide occupies residues 1-19 (MNILKILILLELIYTCVSG). The 159-residue stretch at 29-187 (YMDVKHQKKP…DPVIIVNCGE (159 aa)) folds into the PPIase cyclophilin-type domain. Asn-67 carries an N-linked (GlcNAc...) asparagine glycan. The helical transmembrane segment at 202 to 222 (ILGWIKAAGLPFCSSFIVLMI) threads the bilayer.

The protein belongs to the cyclophilin-type PPIase family. As to expression, expressed specifically in photoreceptor cells.

Its subcellular location is the membrane. The enzyme catalyses [protein]-peptidylproline (omega=180) = [protein]-peptidylproline (omega=0). In terms of biological role, PPIases accelerate the folding of proteins. It catalyzes the cis-trans isomerization of proline imidic peptide bonds in oligopeptides. Acts on the folding of rhodopsin RH1 and RH2 (but not RH3) and is required for visual transduction. The chain is Peptidyl-prolyl cis-trans isomerase, rhodopsin-specific isozyme (NINAA) from Calliphora vicina (Blue blowfly).